The chain runs to 223 residues: Thiamine-phosphate synthase (223 aa).

4-amino-2-methyl-5-(diphosphooxymethyl)pyrimidine-binding positions include 37–41 (QLREK) and Asn-69. Mg(2+)-binding residues include Asp-70 and Asp-89. Residue Ser-108 coordinates 4-amino-2-methyl-5-(diphosphooxymethyl)pyrimidine. Position 134-136 (134-136 (TGT)) interacts with 2-[(2R,5Z)-2-carboxy-4-methylthiazol-5(2H)-ylidene]ethyl phosphate. Residue Lys-137 participates in 4-amino-2-methyl-5-(diphosphooxymethyl)pyrimidine binding. 2-[(2R,5Z)-2-carboxy-4-methylthiazol-5(2H)-ylidene]ethyl phosphate-binding positions include Gly-167 and 187–188 (VS). Residues 197 to 223 (AAATRKLQGSVDTASVESQLPSEEPSA) are disordered. Polar residues predominate over residues 206-217 (SVDTASVESQLP).

Belongs to the thiamine-phosphate synthase family. Requires Mg(2+) as cofactor.

The catalysed reaction is 2-[(2R,5Z)-2-carboxy-4-methylthiazol-5(2H)-ylidene]ethyl phosphate + 4-amino-2-methyl-5-(diphosphooxymethyl)pyrimidine + 2 H(+) = thiamine phosphate + CO2 + diphosphate. It catalyses the reaction 2-(2-carboxy-4-methylthiazol-5-yl)ethyl phosphate + 4-amino-2-methyl-5-(diphosphooxymethyl)pyrimidine + 2 H(+) = thiamine phosphate + CO2 + diphosphate. The enzyme catalyses 4-methyl-5-(2-phosphooxyethyl)-thiazole + 4-amino-2-methyl-5-(diphosphooxymethyl)pyrimidine + H(+) = thiamine phosphate + diphosphate. The protein operates within cofactor biosynthesis; thiamine diphosphate biosynthesis; thiamine phosphate from 4-amino-2-methyl-5-diphosphomethylpyrimidine and 4-methyl-5-(2-phosphoethyl)-thiazole: step 1/1. In terms of biological role, condenses 4-methyl-5-(beta-hydroxyethyl)thiazole monophosphate (THZ-P) and 2-methyl-4-amino-5-hydroxymethyl pyrimidine pyrophosphate (HMP-PP) to form thiamine monophosphate (TMP). The polypeptide is Thiamine-phosphate synthase (Haloquadratum walsbyi (strain DSM 16790 / HBSQ001)).